Reading from the N-terminus, the 211-residue chain is Thiamine-phosphate synthase (211 aa).

4-amino-2-methyl-5-(diphosphooxymethyl)pyrimidine is bound by residues Q37 to K41 and N69. Mg(2+) contacts are provided by D70 and D89. S108 contacts 4-amino-2-methyl-5-(diphosphooxymethyl)pyrimidine. T134–T136 is a 2-[(2R,5Z)-2-carboxy-4-methylthiazol-5(2H)-ylidene]ethyl phosphate binding site. K137 lines the 4-amino-2-methyl-5-(diphosphooxymethyl)pyrimidine pocket. 2-[(2R,5Z)-2-carboxy-4-methylthiazol-5(2H)-ylidene]ethyl phosphate contacts are provided by residues G166 and V186–S187.

Belongs to the thiamine-phosphate synthase family. The cofactor is Mg(2+).

It catalyses the reaction 2-[(2R,5Z)-2-carboxy-4-methylthiazol-5(2H)-ylidene]ethyl phosphate + 4-amino-2-methyl-5-(diphosphooxymethyl)pyrimidine + 2 H(+) = thiamine phosphate + CO2 + diphosphate. The enzyme catalyses 2-(2-carboxy-4-methylthiazol-5-yl)ethyl phosphate + 4-amino-2-methyl-5-(diphosphooxymethyl)pyrimidine + 2 H(+) = thiamine phosphate + CO2 + diphosphate. The catalysed reaction is 4-methyl-5-(2-phosphooxyethyl)-thiazole + 4-amino-2-methyl-5-(diphosphooxymethyl)pyrimidine + H(+) = thiamine phosphate + diphosphate. It participates in cofactor biosynthesis; thiamine diphosphate biosynthesis; thiamine phosphate from 4-amino-2-methyl-5-diphosphomethylpyrimidine and 4-methyl-5-(2-phosphoethyl)-thiazole: step 1/1. Condenses 4-methyl-5-(beta-hydroxyethyl)thiazole monophosphate (THZ-P) and 2-methyl-4-amino-5-hydroxymethyl pyrimidine pyrophosphate (HMP-PP) to form thiamine monophosphate (TMP). The polypeptide is Thiamine-phosphate synthase (Salmonella newport (strain SL254)).